A 737-amino-acid chain; its full sequence is Polyribonucleotide nucleotidyltransferase (737 aa).

Mg(2+) is bound by residues Asp489 and Asp495. Residues 556-615 form the KH domain; that stretch reads PKIDTIKIDVDKIKIVIGKGGETIDKIIAETGVKIDIDEEGNVSIYSSDQDAINRAKEII. The region spanning 625 to 693 is the S1 motif domain; it reads DEVYRAKVVR…EKGRIDASMK (69 aa). Residues 691–737 are disordered; sequence SMKALLPRPPKPEHDEKGEKSERPHRPRHHKDHKPKKEFTETPKDSE. Residues 700-714 show a composition bias toward basic and acidic residues; sequence PKPEHDEKGEKSERP. Over residues 715–724 the composition is skewed to basic residues; that stretch reads HRPRHHKDHK. Over residues 725–737 the composition is skewed to basic and acidic residues; the sequence is PKKEFTETPKDSE.

The protein belongs to the polyribonucleotide nucleotidyltransferase family. It depends on Mg(2+) as a cofactor.

The protein resides in the cytoplasm. The catalysed reaction is RNA(n+1) + phosphate = RNA(n) + a ribonucleoside 5'-diphosphate. Functionally, involved in mRNA degradation. Catalyzes the phosphorolysis of single-stranded polyribonucleotides processively in the 3'- to 5'-direction. The sequence is that of Polyribonucleotide nucleotidyltransferase from Streptococcus pneumoniae (strain Taiwan19F-14).